A 162-amino-acid polypeptide reads, in one-letter code: Interleukin-15 (162 aa).

A signal peptide spans Met-1–Ala-29. A propeptide spanning residues Gly-30–Ala-48 is cleaved from the precursor. 2 disulfide bridges follow: Cys-83–Cys-133 and Cys-90–Cys-136. N-linked (GlcNAc...) asparagine glycosylation is found at Asn-113, Asn-121, and Asn-127.

This sequence belongs to the IL-15/IL-21 family.

It is found in the secreted. Functionally, cytokine that plays a major role in the development of inflammatory and protective immune responses to microbial invaders and parasites by modulating immune cells of both the innate and adaptive immune systems. Stimulates the proliferation of natural killer cells, T-cells and B-cells and promotes the secretion of several cytokines. In monocytes, induces the production of IL8 and monocyte chemotactic protein 1/CCL2, two chemokines that attract neutrophils and monocytes respectively to sites of infection. Unlike most cytokines, which are secreted in soluble form, IL15 is expressed in association with its high affinity IL15RA on the surface of IL15-producing cells and delivers signals to target cells that express IL2RB and IL2RG receptor subunits. Binding to its receptor triggers the phosphorylation of JAK1 and JAK3 and the recruitment and subsequent phosphorylation of signal transducer and activator of transcription-3/STAT3 and STAT5. In mast cells, induces the rapid tyrosine phosphorylation of STAT6 and thereby controls mast cell survival and release of cytokines such as IL4. The sequence is that of Interleukin-15 (IL15) from Bubalus bubalis (Domestic water buffalo).